Consider the following 165-residue polypeptide: 6,7-dimethyl-8-ribityllumazine synthase (165 aa).

5-amino-6-(D-ribitylamino)uracil contacts are provided by residues Tyr30, 61–63, and 90–92; these read ALE and VVI. 95-96 provides a ligand contact to (2S)-2-hydroxy-3-oxobutyl phosphate; that stretch reads ET. Residue His98 is the Proton donor of the active site. Asn123 lines the 5-amino-6-(D-ribitylamino)uracil pocket. Arg137 contributes to the (2S)-2-hydroxy-3-oxobutyl phosphate binding site.

This sequence belongs to the DMRL synthase family.

The enzyme catalyses (2S)-2-hydroxy-3-oxobutyl phosphate + 5-amino-6-(D-ribitylamino)uracil = 6,7-dimethyl-8-(1-D-ribityl)lumazine + phosphate + 2 H2O + H(+). It functions in the pathway cofactor biosynthesis; riboflavin biosynthesis; riboflavin from 2-hydroxy-3-oxobutyl phosphate and 5-amino-6-(D-ribitylamino)uracil: step 1/2. In terms of biological role, catalyzes the formation of 6,7-dimethyl-8-ribityllumazine by condensation of 5-amino-6-(D-ribitylamino)uracil with 3,4-dihydroxy-2-butanone 4-phosphate. This is the penultimate step in the biosynthesis of riboflavin. In Xanthobacter autotrophicus (strain ATCC BAA-1158 / Py2), this protein is 6,7-dimethyl-8-ribityllumazine synthase.